A 295-amino-acid polypeptide reads, in one-letter code: Cytidine deaminase (295 aa).

CMP/dCMP-type deaminase domains follow at residues 48–168 (EDSD…FGPA) and 187–295 (DDDE…YLSL). A substrate-binding site is contributed by 89-91 (NME). A Zn(2+)-binding site is contributed by histidine 102. The Proton donor role is filled by glutamate 104. Zn(2+) is bound by residues cysteine 129 and cysteine 132.

Belongs to the cytidine and deoxycytidylate deaminase family. Homodimer. Zn(2+) is required as a cofactor.

It carries out the reaction cytidine + H2O + H(+) = uridine + NH4(+). The catalysed reaction is 2'-deoxycytidine + H2O + H(+) = 2'-deoxyuridine + NH4(+). Functionally, this enzyme scavenges exogenous and endogenous cytidine and 2'-deoxycytidine for UMP synthesis. The chain is Cytidine deaminase from Vibrio cholerae serotype O1 (strain ATCC 39541 / Classical Ogawa 395 / O395).